The chain runs to 231 residues: Ribose-5-phosphate isomerase A (231 aa).

Substrate contacts are provided by residues 28–31, 83–86, and 96–99; these read TGST, DGAD, and KGGG. The active-site Proton acceptor is Glu-105. Lys-123 is a binding site for substrate.

The protein belongs to the ribose 5-phosphate isomerase family. In terms of assembly, homodimer.

The catalysed reaction is aldehydo-D-ribose 5-phosphate = D-ribulose 5-phosphate. Its pathway is carbohydrate degradation; pentose phosphate pathway; D-ribose 5-phosphate from D-ribulose 5-phosphate (non-oxidative stage): step 1/1. Its function is as follows. Catalyzes the reversible conversion of ribose-5-phosphate to ribulose 5-phosphate. The polypeptide is Ribose-5-phosphate isomerase A (Sinorhizobium medicae (strain WSM419) (Ensifer medicae)).